The chain runs to 62 residues: uncharacterized protein (62 aa).

Residues 1-26 (MGELAASANHGHSPCYPERKGTPGDL) form a disordered region. The segment covering 17–26 (PERKGTPGDL) has biased composition (basic and acidic residues).

This is an uncharacterized protein from Homo sapiens (Human).